The primary structure comprises 186 residues: ADP-ribosylation factor-like protein 6 (186 aa).

Gly2 carries N-myristoyl glycine lipidation. Residues 24 to 31, Thr50, 69 to 73, Gly72, 130 to 133, and Ala164 contribute to the GTP site; these read GLDNSGKT, DMSGQ, and NKMD. Position 50 (Thr50) interacts with Mg(2+).

This sequence belongs to the small GTPase superfamily. Arf family. In terms of assembly, interacts with SEC61B, ARL6IP1, ARL6IP2, ARL6IP3, ARL6IP4 ARL6IP5 and ARL6IP6. Interacts (GTP-bound form) with the BBSome a complex that contains BBS1, BBS2, BBS4, BBS5, BBS7, BBS8/TTC8, BBS9 and BBIP10. Interacts (GTP-free form) with IFT27. In terms of tissue distribution, most abundant in brain and kidney. Expressed in heart and eye. Isoform 2 is expressed only in the retina.

The protein resides in the cell projection. The protein localises to the cilium membrane. Its subcellular location is the cytoplasm. It is found in the cytoskeleton. It localises to the cilium axoneme. The protein resides in the cilium basal body. Functionally, involved in membrane protein trafficking at the base of the ciliary organelle. Mediates recruitment onto plasma membrane of the BBSome complex which would constitute a coat complex required for sorting of specific membrane proteins to the primary cilia. Together with BBS1, is necessary for correct trafficking of PKD1 to primary cilia. Together with the BBSome complex and LTZL1, controls SMO ciliary trafficking and contributes to the sonic hedgehog (SHH) pathway regulation. May regulate cilia assembly and disassembly and subsequent ciliary signaling events such as the Wnt signaling cascade. Isoform 2 may be required for proper retinal function and organization. The sequence is that of ADP-ribosylation factor-like protein 6 (Arl6) from Mus musculus (Mouse).